A 476-amino-acid polypeptide reads, in one-letter code: Mitochondrial-processing peptidase subunit beta (476 aa).

Residues 1–28 (MASRRLALNLAQGVKARAGGVINPFRRG) constitute a mitochondrion transit peptide. Position 84 (His84) interacts with Zn(2+). Glu87 (proton acceptor) is an active-site residue. Zn(2+) contacts are provided by His88 and Glu164.

This sequence belongs to the peptidase M16 family. As to quaternary structure, heterodimer of mpp (alpha) and pep (beta) subunits, forming the mitochondrial processing protease (MPP) in which mpp is involved in substrate recognition and binding and pep is the catalytic subunit. Component of the ubiquinol-cytochrome c oxidoreductase (cytochrome b-c1 complex, complex III, CIII), a multisubunit enzyme composed of 10 subunits. The complex is composed of 3 respiratory subunits cytochrome b (cob), cytochrome c1 (cyt-1) and Rieske protein (fes-1), 2 core protein subunits pep and ucr-1, and 5 low-molecular weight protein subunits qcr6, qcr7, qcr8, qcr9 and probably NCU16844/qcr10. The complex exists as an obligatory dimer and forms supercomplexes (SCs) in the inner mitochondrial membrane with NADH-ubiquinone oxidoreductase (complex I, CI) and cytochrome c oxidase (complex IV, CIV), resulting in different assemblies (supercomplexes SCI(1)III(2), SCIII(2)IV(1) and SCIII(2)IV(2) as well as higher order I(x)III(y)IV(z) megacomplexes). Zn(2+) is required as a cofactor.

Its subcellular location is the mitochondrion matrix. It is found in the mitochondrion inner membrane. The catalysed reaction is Release of N-terminal transit peptides from precursor proteins imported into the mitochondrion, typically with Arg in position P2.. Its activity is regulated as follows. Binding to mpp is required for catalytic activity. Inhibited by metal chelator ethylenediaminetetraacetic acid (EDTA). Catalytic subunit of the essential mitochondrial processing protease (MPP), which cleaves the mitochondrial sequence off newly imported precursors proteins. Preferentially, cleaves after an arginine at position P2. Its function is as follows. Component of the ubiquinol-cytochrome c oxidoreductase, a multisubunit transmembrane complex that is part of the mitochondrial electron transport chain which drives oxidative phosphorylation. The respiratory chain contains 3 multisubunit complexes succinate dehydrogenase (complex II, CII), ubiquinol-cytochrome c oxidoreductase (cytochrome b-c1 complex, complex III, CIII) and cytochrome c oxidase (complex IV, CIV), that cooperate to transfer electrons derived from NADH and succinate to molecular oxygen, creating an electrochemical gradient over the inner membrane that drives transmembrane transport and the ATP synthase. The cytochrome b-c1 complex catalyzes electron transfer from ubiquinol to cytochrome c, linking this redox reaction to translocation of protons across the mitochondrial inner membrane, with protons being carried across the membrane as hydrogens on the quinol. In the process called Q cycle, 2 protons are consumed from the matrix, 4 protons are released into the intermembrane space and 2 electrons are passed to cytochrome c. The protein is Mitochondrial-processing peptidase subunit beta of Neurospora crassa (strain ATCC 24698 / 74-OR23-1A / CBS 708.71 / DSM 1257 / FGSC 987).